We begin with the raw amino-acid sequence, 185 residues long: uncharacterized protein (185 aa).

3 consecutive transmembrane segments (helical) span residues 32 to 52 (LIFV…LLAF), 66 to 86 (LVTL…VLAV), and 155 to 175 (IGYG…FLVV).

Its subcellular location is the cell membrane. This is an uncharacterized protein from Bacillus subtilis (strain 168).